The chain runs to 317 residues: Acetyl-coenzyme A carboxylase carboxyl transferase subunit alpha (317 aa).

The 255-residue stretch at 40 to 294 (RLQHKSQELT…KQQILADLAE (255 aa)) folds into the CoA carboxyltransferase C-terminal domain.

Belongs to the AccA family. As to quaternary structure, acetyl-CoA carboxylase is a heterohexamer composed of biotin carboxyl carrier protein (AccB), biotin carboxylase (AccC) and two subunits each of ACCase subunit alpha (AccA) and ACCase subunit beta (AccD).

The protein localises to the cytoplasm. It carries out the reaction N(6)-carboxybiotinyl-L-lysyl-[protein] + acetyl-CoA = N(6)-biotinyl-L-lysyl-[protein] + malonyl-CoA. It participates in lipid metabolism; malonyl-CoA biosynthesis; malonyl-CoA from acetyl-CoA: step 1/1. In terms of biological role, component of the acetyl coenzyme A carboxylase (ACC) complex. First, biotin carboxylase catalyzes the carboxylation of biotin on its carrier protein (BCCP) and then the CO(2) group is transferred by the carboxyltransferase to acetyl-CoA to form malonyl-CoA. This is Acetyl-coenzyme A carboxylase carboxyl transferase subunit alpha from Haemophilus ducreyi (strain 35000HP / ATCC 700724).